The chain runs to 230 residues: Ribonuclease HII (230 aa).

Residues Phe28 to Asp217 form the RNase H type-2 domain. A divalent metal cation is bound by residues Asp34, Glu35, and Asp126. The disordered stretch occupies residues Lys209–Phe230. Residues Gln215–Phe230 show a composition bias toward polar residues.

It belongs to the RNase HII family. Mn(2+) serves as cofactor. Requires Mg(2+) as cofactor.

The protein localises to the cytoplasm. The catalysed reaction is Endonucleolytic cleavage to 5'-phosphomonoester.. In terms of biological role, endonuclease that specifically degrades the RNA of RNA-DNA hybrids. This is Ribonuclease HII from Citrifermentans bemidjiense (strain ATCC BAA-1014 / DSM 16622 / JCM 12645 / Bem) (Geobacter bemidjiensis).